The chain runs to 313 residues: MFSIVSSRPKSLVRPNSRSIVLPALVALTSIIFSKDNRLADKMESGKLHYKDVNSTFNVDKPYKSRSKPNYPGHVPLNAFEKLLMMAGSSIGSYLHPERNEFIVGLGESTAFTPVLRRLQRQMLSDPVGRQILRERPRITSESLDLDYLRSLPKNTIGSAYIQWLDREGVSPDTRVPVRYIDDEELAYIYQRYRECHDFYHAITGLPIIIEGEIAVKVLEFTNIGIPMSGLGGLFAPLRLRPKQRERLYGIYYPWAFKSGLNSKPLINVYWEKILEQDINEFRRDMGIEQPPDLRELRRKQKKLPEPERENAN.

Zn(2+) contacts are provided by His-197, Asp-198, His-201, and Glu-213. The tract at residues 290–313 is disordered; the sequence is QPPDLRELRRKQKKLPEPERENAN. Residues 303–313 are compositionally biased toward basic and acidic residues; the sequence is KLPEPERENAN.

The protein belongs to the COQ4 family. Component of a multi-subunit COQ enzyme complex, composed of at least COQ3, COQ4, COQ5, COQ6, COQ7 and COQ9. The cofactor is Zn(2+).

It localises to the mitochondrion inner membrane. It catalyses the reaction a 4-hydroxy-3-methoxy-5-(all-trans-polyprenyl)benzoate + H(+) = a 2-methoxy-6-(all-trans-polyprenyl)phenol + CO2. The protein operates within cofactor biosynthesis; ubiquinone biosynthesis. In terms of biological role, lyase that catalyzes the C1-decarboxylation of 4-hydroxy-3-methoxy-5-(all-trans-polyprenyl)benzoic acid into 2-methoxy-6-(all-trans-polyprenyl)phenol during ubiquinone biosynthesis. The chain is Ubiquinone biosynthesis protein COQ4, mitochondrial from Meyerozyma guilliermondii (strain ATCC 6260 / CBS 566 / DSM 6381 / JCM 1539 / NBRC 10279 / NRRL Y-324) (Yeast).